A 672-amino-acid polypeptide reads, in one-letter code: tRNA 5-methylaminomethyl-2-thiouridine biosynthesis bifunctional protein MnmC (672 aa).

The segment at 1–243 (MTSIKNAELG…KREMIAGSME (243 aa)) is tRNA (mnm(5)s(2)U34)-methyltransferase. The tract at residues 269–672 (IGGGIASAAL…LRKGKAITEL (404 aa)) is FAD-dependent cmnm(5)s(2)U34 oxidoreductase.

This sequence in the N-terminal section; belongs to the methyltransferase superfamily. tRNA (mnm(5)s(2)U34)-methyltransferase family. The protein in the C-terminal section; belongs to the DAO family. FAD serves as cofactor.

It localises to the cytoplasm. The catalysed reaction is 5-aminomethyl-2-thiouridine(34) in tRNA + S-adenosyl-L-methionine = 5-methylaminomethyl-2-thiouridine(34) in tRNA + S-adenosyl-L-homocysteine + H(+). Catalyzes the last two steps in the biosynthesis of 5-methylaminomethyl-2-thiouridine (mnm(5)s(2)U) at the wobble position (U34) in tRNA. Catalyzes the FAD-dependent demodification of cmnm(5)s(2)U34 to nm(5)s(2)U34, followed by the transfer of a methyl group from S-adenosyl-L-methionine to nm(5)s(2)U34, to form mnm(5)s(2)U34. The protein is tRNA 5-methylaminomethyl-2-thiouridine biosynthesis bifunctional protein MnmC of Vibrio campbellii (strain ATCC BAA-1116).